The following is a 336-amino-acid chain: PTS system glucitol/sorbitol-specific EIIB component (336 aa).

The 193-residue stretch at 3–195 (KYNAIKIVKG…AVQSMITTIL (193 aa)) folds into the PTS EIIB type-5 domain. C75 functions as the Phosphocysteine intermediate; for EIIB activity in the catalytic mechanism. At C75 the chain carries Phosphocysteine; by EIIA. The next 5 membrane-spanning stretches (helical) occupy residues 194 to 214 (ILPF…SGFG), 228 to 248 (GIGL…ALLG), 250 to 270 (GAVI…KGTI), 278 to 298 (ALFA…LGLA), and 312 to 332 (VLYS…VASI).

The protein localises to the cell membrane. It catalyses the reaction D-sorbitol(out) + N(pros)-phospho-L-histidyl-[protein] = D-sorbitol 6-phosphate(in) + L-histidyl-[protein]. Functionally, the phosphoenolpyruvate-dependent sugar phosphotransferase system (sugar PTS), a major carbohydrate active transport system, catalyzes the phosphorylation of incoming sugar substrates concomitantly with their translocation across the cell membrane. The enzyme II complex composed of SrlA, SrlB and SrlE is involved in glucitol/sorbitol transport. This Clostridium beijerinckii (strain ATCC 51743 / NCIMB 8052) (Clostridium acetobutylicum) protein is PTS system glucitol/sorbitol-specific EIIB component (srlE).